Here is a 477-residue protein sequence, read N- to C-terminus: Putative multidrug resistance protein MdtD (477 aa).

14 consecutive transmembrane segments (helical) span residues 13–33 (LWIV…VNTA), 50–70 (SVIV…GWLA), 73–93 (VGVQ…SILC), 107–127 (VVQG…VMKI), 139–159 (FVTL…GFLV), 166–186 (WIFL…LLLM), 196–216 (FDIS…LALD), 220–240 (GMGL…AALA), 268–288 (LTAS…TPLF), 291–311 (VGMG…IIGS), 326–348 (GYRN…FPLV), 352–374 (GWIW…RFSA), 394–414 (LLSM…GILI), and 432–452 (AFIY…LAFA).

It belongs to the major facilitator superfamily. TCR/Tet family.

The protein localises to the cell inner membrane. This chain is Putative multidrug resistance protein MdtD, found in Serratia proteamaculans (strain 568).